A 265-amino-acid chain; its full sequence is Thiazole synthase (265 aa).

K103 serves as the catalytic Schiff-base intermediate with DXP. Residues G164, 190–191, and 212–213 each bind 1-deoxy-D-xylulose 5-phosphate; these read AG and NT.

This sequence belongs to the ThiG family. In terms of assembly, homotetramer. Forms heterodimers with either ThiH or ThiS.

The protein localises to the cytoplasm. The catalysed reaction is [ThiS sulfur-carrier protein]-C-terminal-Gly-aminoethanethioate + 2-iminoacetate + 1-deoxy-D-xylulose 5-phosphate = [ThiS sulfur-carrier protein]-C-terminal Gly-Gly + 2-[(2R,5Z)-2-carboxy-4-methylthiazol-5(2H)-ylidene]ethyl phosphate + 2 H2O + H(+). It participates in cofactor biosynthesis; thiamine diphosphate biosynthesis. In terms of biological role, catalyzes the rearrangement of 1-deoxy-D-xylulose 5-phosphate (DXP) to produce the thiazole phosphate moiety of thiamine. Sulfur is provided by the thiocarboxylate moiety of the carrier protein ThiS. In vitro, sulfur can be provided by H(2)S. This is Thiazole synthase from Bordetella avium (strain 197N).